Reading from the N-terminus, the 613-residue chain is Ribosome-associated molecular chaperone SSB1 (613 aa).

The nucleotide binding domain (NBD) stretch occupies residues 1–391 (MAEGVFPGAI…ILTGQSTSDE (391 aa)). ATP-binding positions include 16 to 18 (TTY), Lys-73, 205 to 207 (GGT), 271 to 278 (ERAKRTLS), and Gly-342. An inter-domain linker region spans residues 392-402 (TKDLLLLDVAP). The segment at 403-613 (LSLGVGMAGD…RAVTKAMSTR (211 aa)) is substrate binding domain (SBD). Residues 516-612 (SEEIEQMVNQ…KRAVTKAMST (97 aa)) form a lid domain (SBDalpha) region. The short motif at 574-582 (VEAALADAF) is the Nuclear export signal element.

The protein belongs to the heat shock protein 70 family. Ssb-type Hsp70 subfamily. As to quaternary structure, binds to ribosomes. Binds close to the ribosomal tunnel exit via contacts with both ribosomal proteins and rRNA. Directly interacts with nascent polypeptides. This interaction is dependent on the ribosome-associated complex (RAC). Interacts with SSE1. Interacts with FES1.

The protein localises to the cytoplasm. The enzyme catalyses ATP + H2O = ADP + phosphate + H(+). Functionally, ribosome-bound, Hsp70-type chaperone that assists in the cotranslational folding of newly synthesized proteins in the cytosol. Stimulates folding by interacting with nascent chains, binding to short, largely hydrophobic sequences exposed by unfolded proteins, thereby stabilizing longer, more slowly translated, and aggregation-prone nascent polypeptides and domains that cannot fold stably until fully synthesized. The Hsp70-protein substrate interaction depends on ATP-binding and on allosteric regulation between the NBD and the SBD. The ATP-bound state is characterized by a fast exchange rate of substrate (low affinity state), while in the ADP-bound state exchange is much slower (high affinity state). During the Hsp70 cycle, the chaperone switches between the ATP-bound state (open conformation) and the ADP-bound state (closed conformation) by major conformational rearrangements involving mainly the lid domain. Ssb cooperates with a specific Hsp40/Hsp70 co-chaperone termed the ribosome-associated complex (RAC), which stimulates the ATPase activity of the ribosome-associated pool of Ssbs and switches it to the high affinity substrate binding state. Hsp110 chaperone SSE1 and FES1 act as nucleotide exchange factors that cause substrate release. This Kluyveromyces marxianus (Yeast) protein is Ribosome-associated molecular chaperone SSB1 (SSB1).